A 247-amino-acid chain; its full sequence is Killer cell lectin-like receptor subfamily I member 2 (247 aa).

Residues 1-12 (MPRKKQNERGTN) are compositionally biased toward basic and acidic residues. The segment at 1–39 (MPRKKQNERGTNKQEIINIETKSSTFQEKQRQSKTDQIS) is disordered. The Cytoplasmic portion of the chain corresponds to 1–79 (MPRKKQNERG…GTDPWLTTWR (79 aa)). A helical membrane pass occupies residues 80-100 (IITVILGTSCIILVTKVGFLI). Topologically, residues 101–247 (PNLFSRGEKR…KAYTCEFNLQ (147 aa)) are extracellular. Residues N125, N196, N212, and N218 are each glycosylated (N-linked (GlcNAc...) asparagine). The 105-residue stretch at 139–243 (FGNNFYLFFR…CSSKKAYTCE (105 aa)) folds into the C-type lectin domain. 2 cysteine pairs are disulfide-bonded: C160/C242 and C221/C234.

In terms of assembly, heterodimer with KLRE1. In terms of tissue distribution, expressed in natural killer (NK) cells.

The protein resides in the cell membrane. Lectin-like receptor for natural killer (NK) cells. Heterodimer formation with KLRE1 mediates NK cell cytolytic activity. The polypeptide is Killer cell lectin-like receptor subfamily I member 2 (Rattus norvegicus (Rat)).